The following is a 1048-amino-acid chain: Probable histidine kinase 2 (1048 aa).

The Cytoplasmic segment spans residues 1 to 16 (MREVEEVSKWRRRCCY). A helical transmembrane segment spans residues 17–37 (FWILFPLAVIATCMTITVVTF). At 38 to 336 (CSSTMYMTEV…AMVGVFRRGG (299 aa)) the chain is on the extracellular side. Residues 337–357 (VTMVAVACAAAAAATVACVLM) form a helical membrane-spanning segment. Residues 358–1048 (ARALRRAVAR…AVHGVCKGKN (691 aa)) lie on the Cytoplasmic side of the membrane. Residues 398-662 (SASHDIRSAL…CFGFNVLLKT (265 aa)) enclose the Histidine kinase domain. His-401 carries the phosphohistidine; by autocatalysis modification. A Response regulatory domain is found at 912–1044 (HVLLVEDTLV…RIVEAVHGVC (133 aa)). Position 975 is a 4-aspartylphosphate (Asp-975).

Activation probably requires a transfer of a phosphate group between a His in the transmitter domain and an Asp of the receiver domain.

The protein resides in the cell membrane. The enzyme catalyses ATP + protein L-histidine = ADP + protein N-phospho-L-histidine.. In terms of biological role, cytokinin receptor related to bacterial two-component regulators. Functions as a histidine kinase and transmits the stress signal to a downstream MAPK cascade. In Oryza sativa subsp. indica (Rice), this protein is Probable histidine kinase 2.